An 840-amino-acid chain; its full sequence is MSKYEFIKIEKKWQEFWDNNKTYKVIEDPNIPKEKRLYILDMFPYPSANGLHVGHPEGYTATDIFARYKILNGFHVLHPIGFDSFGLPAENYAIQTGTHPKKSTEENINKFKKQIKALGFAYDWDREIRTHDENYYKWTQWIFLQLYKKGLAYAKEMPVWYCPELGTVLANEEIIQTPNGPKSERGFHNVEKKYLRQWVLKITKYAERLLNDLEELEWPESVKEMQRNWIGKSTGVEIDFEIEGYNDKIKVFTTRPDTIFGITYLVIAPENKLVEKITKDNFKSNVLKYIKQEELKSDLKRTSLEKDKSGVFTGSYAFHPITNVKIPIWVGSYVLGTYGSGAVMGVPAHDERDFQFAKKYKLKILPVISKSGKNEILEKAFINDGISINSPDEFNNLKNSEVKDKVIKWLTKNKKGKETVTYKLRDWVFSRQRYWGEPIPILFDKLGNAIPLEKNDLPLKLPETANYKPSGTGESPLSRIKNWVNVKDTDFTRETNTMPQWAGSCWYYLRYLDPKNSKEFANHKKIEYWMPVDLYIGGAEHTVLHLLYSRFWHKVLYDLGHVNTKEPFKKLINQGIITAFSYQKENGVLIPNDQVIEKDNKFFDKKDNKEVTQVIAKMSKSLKNVINPDGIIKEFGADSIRIYEMFMGPLTDSKPWNTKGIIGVFRFLNKIWNLREKELSKDNPPKEIMSQLHKVIKKVTEDTEKLNFNTAISAMMIFINELSKYEKNYLNIFKPFIIILSPYAPHLAEELWEYIGETPSLFKNSKWPKFDETLIIKETKEIVLQINGKIKDKILLNKETDEEELKEIAMENSKIKSNLFNKKIVKIIVIKNKLVNIVIK.

The short motif at 44–55 (PYPSANGLHVGH) is the 'HIGH' region element. Positions 617–621 (KMSKS) match the 'KMSKS' region motif. An ATP-binding site is contributed by Lys-620.

The protein belongs to the class-I aminoacyl-tRNA synthetase family.

It localises to the cytoplasm. It carries out the reaction tRNA(Leu) + L-leucine + ATP = L-leucyl-tRNA(Leu) + AMP + diphosphate. In Borreliella afzelii (strain PKo) (Borrelia afzelii), this protein is Leucine--tRNA ligase.